A 281-amino-acid chain; its full sequence is Elongation factor 1-delta (281 aa).

An N-acetylalanine modification is found at alanine 2. Residue lysine 17 is modified to N6-acetyllysine. Residues serine 37, serine 44, serine 60, serine 86, and serine 106 each carry the phosphoserine modification. The leucine-zipper stretch occupies residues 80–115 (LVVRIASLEVENQSLRGVVQELQQAISKLEARLNVL). At lysine 107 the chain carries N6-acetyllysine. The residue at position 117 (lysine 117) is an N6-acetyllysine; alternate. Position 117 is an N6-succinyllysine; alternate (lysine 117). The disordered stretch occupies residues 118 to 172 (SSPGHRATAPQTQHVSPMRQVEPPAKKPATPAEDDEDDDIDLFGSDNEEEDKEAA). Serine 119 carries the post-translational modification Phosphoserine. Position 129 is a phosphothreonine (threonine 129). Serine 133 is modified (phosphoserine). Threonine 147 is modified (phosphothreonine). Residues 149–169 (AEDDEDDDIDLFGSDNEEEDK) are compositionally biased toward acidic residues. Phosphoserine; by CK2 is present on serine 162. The segment at 173 to 281 (QLREERLRQY…SVDIAAFNKI (109 aa)) is catalytic (GEF).

This sequence belongs to the EF-1-beta/EF-1-delta family. As to quaternary structure, EF-1 is composed of 4 subunits: alpha, beta, delta isoform 1, and gamma. Isoform 2 interacts with HSF1 and NFE2L2.

The protein resides in the nucleus. In terms of biological role, EF-1-beta and EF-1-delta stimulate the exchange of GDP bound to EF-1-alpha to GTP, regenerating EF-1-alpha for another round of transfer of aminoacyl-tRNAs to the ribosome. Functionally, regulates induction of heat-shock-responsive genes through association with heat shock transcription factors and direct DNA-binding at heat shock promoter elements (HSE). The protein is Elongation factor 1-delta (EEF1D) of Macaca fascicularis (Crab-eating macaque).